The chain runs to 454 residues: Bifunctional protein GlmU (454 aa).

Residues 1–226 (MALNVVILAA…AIEVEGANNR (226 aa)) form a pyrophosphorylase region. UDP-N-acetyl-alpha-D-glucosamine-binding positions include 8–11 (LAAG), Lys22, Gln73, 78–79 (GT), 100–102 (YGD), Gly137, Glu151, Asn166, and Asn224. Residue Asp102 coordinates Mg(2+). Residue Asn224 coordinates Mg(2+). Residues 227–247 (VQLAQLERAYQARAAEKLMLE) are linker. The N-acetyltransferase stretch occupies residues 248-454 (GANLRDPARI…GWPRPVKLKK (207 aa)). Positions 330 and 348 each coordinate UDP-N-acetyl-alpha-D-glucosamine. Catalysis depends on His360, which acts as the Proton acceptor. The UDP-N-acetyl-alpha-D-glucosamine site is built by Tyr363 and Asn374. Acetyl-CoA is bound by residues Ala377, 383-384 (NY), Ser402, Ala420, and Arg437.

The protein in the N-terminal section; belongs to the N-acetylglucosamine-1-phosphate uridyltransferase family. In the C-terminal section; belongs to the transferase hexapeptide repeat family. Homotrimer. Requires Mg(2+) as cofactor.

The protein localises to the cytoplasm. It catalyses the reaction alpha-D-glucosamine 1-phosphate + acetyl-CoA = N-acetyl-alpha-D-glucosamine 1-phosphate + CoA + H(+). The enzyme catalyses N-acetyl-alpha-D-glucosamine 1-phosphate + UTP + H(+) = UDP-N-acetyl-alpha-D-glucosamine + diphosphate. It functions in the pathway nucleotide-sugar biosynthesis; UDP-N-acetyl-alpha-D-glucosamine biosynthesis; N-acetyl-alpha-D-glucosamine 1-phosphate from alpha-D-glucosamine 6-phosphate (route II): step 2/2. Its pathway is nucleotide-sugar biosynthesis; UDP-N-acetyl-alpha-D-glucosamine biosynthesis; UDP-N-acetyl-alpha-D-glucosamine from N-acetyl-alpha-D-glucosamine 1-phosphate: step 1/1. The protein operates within bacterial outer membrane biogenesis; LPS lipid A biosynthesis. In terms of biological role, catalyzes the last two sequential reactions in the de novo biosynthetic pathway for UDP-N-acetylglucosamine (UDP-GlcNAc). The C-terminal domain catalyzes the transfer of acetyl group from acetyl coenzyme A to glucosamine-1-phosphate (GlcN-1-P) to produce N-acetylglucosamine-1-phosphate (GlcNAc-1-P), which is converted into UDP-GlcNAc by the transfer of uridine 5-monophosphate (from uridine 5-triphosphate), a reaction catalyzed by the N-terminal domain. This Shewanella woodyi (strain ATCC 51908 / MS32) protein is Bifunctional protein GlmU.